Consider the following 518-residue polypeptide: Sugar transport protein MST3 (518 aa).

Over 1–18 (MAGGAVVSTGAGKDYPGK) the chain is Cytoplasmic. A helical transmembrane segment spans residues 19–39 (LTLFVFFTCVVAATGGLIFGY). Over 40–80 (DIGISGGVTSMDPFLRKFFPEVYRKKQMADKNNQYCKYDNQ) the chain is Extracellular. The chain crosses the membrane as a helical span at residues 81–101 (LLQTFTSSLYLAALVSSFFAA). Topologically, residues 102-117 (TVTRVLGRKWSMFAGG) are cytoplasmic. The helical transmembrane segment at 118-138 (LTFLIGAALNGAAENVAMLIV) threads the bilayer. The Extracellular segment spans residues 139 to 140 (GR). The helical transmembrane segment at 141–161 (ILLGVGVGFANQSVPVYLSEM) threads the bilayer. Residues 162 to 167 (APARLR) are Cytoplasmic-facing. Residues 168–188 (GMLNIGFQLMITIGILAAELI) form a helical membrane-spanning segment. Residues 189–202 (NYGTAKIKAGWGWR) lie on the Extracellular side of the membrane. The helical transmembrane segment at 203-223 (VSLALAAVPAAIITLGSLFLP) threads the bilayer. At 224–290 (DTPNSLIDRG…YRAQLTMAIC (67 aa)) the chain is on the cytoplasmic side. The helical transmembrane segment at 291–311 (IPFFQQLTGINVIMFYAPVLF) threads the bilayer. Residues 312–322 (DTLGFKSDASL) are Extracellular-facing. The chain crosses the membrane as a helical span at residues 323 to 343 (MSAVITGLVNVFATLVSIFTV). Over 344-351 (DRLGRRKL) the chain is Cytoplasmic. Residues 352 to 372 (FLQGGAQMVVCQVVVGTLIAV) form a helical membrane-spanning segment. At 373–387 (KFGTSGIGDIPKGYA) the chain is on the extracellular side. The helical transmembrane segment at 388 to 408 (AVVVLFICMYVAGFAWSWGPL) threads the bilayer. At 409 to 427 (GWLVPSEIFPLEIRPAGQS) the chain is on the cytoplasmic side. Residues 428–448 (INVSVNMLFTFVIAQAFLTML) traverse the membrane as a helical segment. The Extracellular segment spans residues 449-452 (CHMK). A helical transmembrane segment spans residues 453-473 (FGLFYFFAGWVVIMTVFIALF). Residues 474-518 (LPETKNVPIEEMVLVWKSHWFWRRFIGDHDVHVGANHVSNNKLQP) lie on the Cytoplasmic side of the membrane.

The protein belongs to the major facilitator superfamily. Sugar transporter (TC 2.A.1.1) family. Highly expressed in roots. Expressed in xylem and sclerenchyma cells of roots. Expressed at low levels in leaves.

It localises to the membrane. Mediates active uptake of hexoses by sugar:proton symport. Can transport glucose, xylose and 3-O-methylglucose. May be involved in the accumulation of monosaccharides required for cell wall synthesis during root development. The chain is Sugar transport protein MST3 from Oryza sativa subsp. japonica (Rice).